A 264-amino-acid polypeptide reads, in one-letter code: Protein DSE2 (264 aa).

The first 23 residues, 1 to 23 (MQFKKSSIVSFLSLLGSLTKAAA), serve as a signal peptide directing secretion. The segment covering 75-92 (TRESVVTSTLSSTSLLPE) has biased composition (low complexity). The disordered stretch occupies residues 75-213 (TRESVVTSTL…STSTSSSSVL (139 aa)). The span at 93 to 104 (TTEESTQEDEQT) shows a compositional bias: acidic residues. Low complexity-rich tracts occupy residues 105-147 (TDFT…PTTS), 157-168 (STSVITTKSTSK), and 178-211 (TSTL…SSSS). D247 carries GPI-anchor amidated aspartate lipidation. Residues 248–264 (AATTYTKTRTVYATISS) constitute a propeptide, removed in mature form.

The protein resides in the secreted. It localises to the cell wall. Its subcellular location is the membrane. Functionally, involved in pseudohyphal growth, cell wall metabolism and required for the separation of the mother and daughter cells. This Kluyveromyces lactis (strain ATCC 8585 / CBS 2359 / DSM 70799 / NBRC 1267 / NRRL Y-1140 / WM37) (Yeast) protein is Protein DSE2 (DSE2).